The following is a 273-amino-acid chain: Homeobox protein Nkx-2.2 (273 aa).

Disordered stretches follow at residues Met-1 to Val-56 and Ala-91 to Arg-131. Over residues Asp-20–Gly-38 the composition is skewed to acidic residues. The homeobox DNA-binding region spans Lys-128–Arg-187.

Belongs to the NK-2 homeobox family. As to quaternary structure, interacts with OLIG2.

The protein resides in the nucleus. Its function is as follows. Transcriptional activator involved in the development of insulin-producting beta cells in the endocrine pancreas. May also be involved in specifying diencephalic neuromeric boundaries, and in controlling the expression of genes that play a role in axonal guidance. Binds to elements within the NEUROD1 promoter. In Mesocricetus auratus (Golden hamster), this protein is Homeobox protein Nkx-2.2 (NKX2-2).